The chain runs to 517 residues: Heat shock 70-related protein 5 (517 aa).

Belongs to the heat shock protein 70 family.

In terms of biological role, may function in protein folding and assembly, and disassembly of protein complexes. The protein is Heat shock 70-related protein 5 of Dictyostelium discoideum (Social amoeba).